The sequence spans 209 residues: Guanylate kinase (209 aa).

Residues 5 to 182 (GLLIVISGPS…AVTKINSIIV (178 aa)) enclose the Guanylate kinase-like domain. 12–19 (GPSGAGKG) is a binding site for ATP.

It belongs to the guanylate kinase family.

It localises to the cytoplasm. The catalysed reaction is GMP + ATP = GDP + ADP. Essential for recycling GMP and indirectly, cGMP. In Clostridium acetobutylicum (strain ATCC 824 / DSM 792 / JCM 1419 / IAM 19013 / LMG 5710 / NBRC 13948 / NRRL B-527 / VKM B-1787 / 2291 / W), this protein is Guanylate kinase.